The following is a 231-amino-acid chain: Putative cobalt transport protein CbiM 1 (231 aa).

Transmembrane regions (helical) follow at residues 6-26 (GFLPIGWCVFWAVLAAPFLIY), 41-61 (VLPLMAVCGAFIFVVSLVDIP), 79-99 (FFGPAVTSVLGLIILVFQALL), 107-127 (TLGATAFSMAVMGPLAAWLVF), 136-156 (VPLGPAVFCAAVVANCVTYLI), and 172-192 (LTAFLAAAAVFAVVQIPISII).

This sequence belongs to the CbiM family. Forms an energy-coupling factor (ECF) transporter complex composed of an ATP-binding protein (A component, CbiO), a transmembrane protein (T component, CbiQ) and 2 possible substrate-capture proteins (S components, CbiM and CbiN) of unknown stoichimetry.

It localises to the cell membrane. It participates in cofactor biosynthesis; adenosylcobalamin biosynthesis. Its function is as follows. Part of the energy-coupling factor (ECF) transporter complex CbiMNOQ involved in cobalt import. The sequence is that of Putative cobalt transport protein CbiM 1 from Methanocorpusculum labreanum (strain ATCC 43576 / DSM 4855 / Z).